The sequence spans 209 residues: Uridine kinase (209 aa).

Residue 12-19 participates in ATP binding; it reads GGTGSGKS.

Belongs to the uridine kinase family.

Its subcellular location is the cytoplasm. The enzyme catalyses uridine + ATP = UMP + ADP + H(+). It carries out the reaction cytidine + ATP = CMP + ADP + H(+). Its pathway is pyrimidine metabolism; CTP biosynthesis via salvage pathway; CTP from cytidine: step 1/3. The protein operates within pyrimidine metabolism; UMP biosynthesis via salvage pathway; UMP from uridine: step 1/1. The chain is Uridine kinase from Clostridium tetani (strain Massachusetts / E88).